Consider the following 136-residue polypeptide: ATP synthase epsilon chain (136 aa).

The tract at residues 104–136 (AGMEGQPASPEKVKAQQQLNEARARMQASKSAD) is disordered.

Belongs to the ATPase epsilon chain family. F-type ATPases have 2 components, CF(1) - the catalytic core - and CF(0) - the membrane proton channel. CF(1) has five subunits: alpha(3), beta(3), gamma(1), delta(1), epsilon(1). CF(0) has three main subunits: a, b and c.

The protein resides in the cellular thylakoid membrane. In terms of biological role, produces ATP from ADP in the presence of a proton gradient across the membrane. This Synechococcus sp. (strain CC9902) protein is ATP synthase epsilon chain.